The following is a 273-amino-acid chain: F-actin-capping protein subunit alpha (273 aa).

The protein belongs to the F-actin-capping protein alpha subunit family. As to quaternary structure, component of the F-actin capping complex, composed of a heterodimer of an alpha and a beta subunit.

The protein resides in the cytoplasm. It localises to the cytoskeleton. Its subcellular location is the actin patch. F-actin-capping proteins bind in a Ca(2+)-independent manner to the fast growing ends of actin filaments (barbed end) thereby blocking the exchange of subunits at these ends. Unlike other capping proteins (such as gelsolin and severin), these proteins do not sever actin filaments. This is F-actin-capping protein subunit alpha (fac-1) from Neurospora crassa (strain ATCC 24698 / 74-OR23-1A / CBS 708.71 / DSM 1257 / FGSC 987).